A 474-amino-acid chain; its full sequence is Cysteine--tRNA ligase (474 aa).

Residue Cys30 coordinates Zn(2+). The 'HIGH' region signature appears at 32-42 (PTVYNFAHIGN). Residues Cys212, His237, and Glu241 each contribute to the Zn(2+) site. The short motif at 270–274 (KMSKS) is the 'KMSKS' region element. An ATP-binding site is contributed by Lys273.

It belongs to the class-I aminoacyl-tRNA synthetase family. Monomer. The cofactor is Zn(2+).

The protein localises to the cytoplasm. It catalyses the reaction tRNA(Cys) + L-cysteine + ATP = L-cysteinyl-tRNA(Cys) + AMP + diphosphate. The polypeptide is Cysteine--tRNA ligase (Leptospira borgpetersenii serovar Hardjo-bovis (strain JB197)).